Consider the following 299-residue polypeptide: Probable alpha-L-glutamate ligase 2 (299 aa).

One can recognise an ATP-grasp domain in the interval 104–287 (MQLMSRRGIG…VAGAIIEFVE (184 aa)). ATP-binding positions include Lys-141, 178–179 (EY), Asp-187, and 211–213 (RSN). The Mg(2+) site is built by Asp-248, Glu-260, and Asn-262. Positions 248, 260, and 262 each coordinate Mn(2+).

It belongs to the RimK family. It depends on Mg(2+) as a cofactor. Requires Mn(2+) as cofactor.

The sequence is that of Probable alpha-L-glutamate ligase 2 from Shewanella sp. (strain MR-4).